The sequence spans 250 residues: Dimethyl sulfide dehydrogenase assembly chaperone protein (250 aa).

The disordered stretch occupies residues 231–250 (SAEARSDSAPDAAAHQNLWG).

Belongs to the type II DMSO reductase enzyme chaperone family.

The protein resides in the cytoplasm. Its function is as follows. May function as a system-specific chaperone protein essential for the assembly of an active dimethyl sulfide dehydrogenase DdhABC. This is Dimethyl sulfide dehydrogenase assembly chaperone protein (ddhD) from Rhodovulum sulfidophilum (Rhodobacter sulfidophilus).